The sequence spans 423 residues: Glutamate-1-semialdehyde 2,1-aminomutase (423 aa).

N6-(pyridoxal phosphate)lysine is present on Lys-259.

Belongs to the class-III pyridoxal-phosphate-dependent aminotransferase family. HemL subfamily. In terms of assembly, homodimer. The cofactor is pyridoxal 5'-phosphate.

The protein localises to the cytoplasm. It catalyses the reaction (S)-4-amino-5-oxopentanoate = 5-aminolevulinate. The protein operates within porphyrin-containing compound metabolism; protoporphyrin-IX biosynthesis; 5-aminolevulinate from L-glutamyl-tRNA(Glu): step 2/2. In Thermosipho melanesiensis (strain DSM 12029 / CIP 104789 / BI429), this protein is Glutamate-1-semialdehyde 2,1-aminomutase.